We begin with the raw amino-acid sequence, 92 residues long: Small ribosomal subunit protein uS19c (92 aa).

Belongs to the universal ribosomal protein uS19 family.

The protein resides in the plastid. Its subcellular location is the chloroplast. Its function is as follows. Protein S19 forms a complex with S13 that binds strongly to the 16S ribosomal RNA. This chain is Small ribosomal subunit protein uS19c, found in Angiopteris evecta (Mule's foot fern).